The primary structure comprises 198 residues: Ribonuclease HII (198 aa).

In terms of domain architecture, RNase H type-2 spans 10–198; it reads HLVAGVDEVG…PVKRALELAS (189 aa). A divalent metal cation-binding residues include D16, E17, and D108.

It belongs to the RNase HII family. It depends on Mn(2+) as a cofactor. Mg(2+) serves as cofactor.

The protein resides in the cytoplasm. The enzyme catalyses Endonucleolytic cleavage to 5'-phosphomonoester.. Endonuclease that specifically degrades the RNA of RNA-DNA hybrids. The sequence is that of Ribonuclease HII from Salmonella arizonae (strain ATCC BAA-731 / CDC346-86 / RSK2980).